The following is a 175-amino-acid chain: Large ribosomal subunit protein bL17m (175 aa).

Residues 1-8 constitute a mitochondrion transit peptide; it reads MRLSVCAA. Residues 155-175 form a disordered region; the sequence is DLSQSQEASNHSSHTAQTPGI. Positions 157 to 175 are enriched in polar residues; sequence SQSQEASNHSSHTAQTPGI.

It belongs to the bacterial ribosomal protein bL17 family. In terms of assembly, component of the mitochondrial ribosome large subunit (39S) which comprises a 16S rRNA and about 50 distinct proteins.

It is found in the mitochondrion. The protein is Large ribosomal subunit protein bL17m (MRPL17) of Pongo abelii (Sumatran orangutan).